A 172-amino-acid polypeptide reads, in one-letter code: uncharacterized protein (172 aa).

A helical membrane pass occupies residues 109–129 (MLLLYLYYNLLLLTASTPLTF).

The protein localises to the membrane. This is an uncharacterized protein from Saccharomyces cerevisiae (strain ATCC 204508 / S288c) (Baker's yeast).